The primary structure comprises 555 residues: Formate--tetrahydrofolate ligase (555 aa).

65–72 is an ATP binding site; sequence TPAGEGKT.

Belongs to the formate--tetrahydrofolate ligase family.

It carries out the reaction (6S)-5,6,7,8-tetrahydrofolate + formate + ATP = (6R)-10-formyltetrahydrofolate + ADP + phosphate. The protein operates within one-carbon metabolism; tetrahydrofolate interconversion. The sequence is that of Formate--tetrahydrofolate ligase from Syntrophomonas wolfei subsp. wolfei (strain DSM 2245B / Goettingen).